Reading from the N-terminus, the 333-residue chain is Protoheme IX farnesyltransferase (333 aa).

A run of 7 helical transmembrane segments spans residues 63–83 (LACT…LNCI), 109–129 (AAFI…VSGV), 132–152 (LAAG…TAIL), 160–180 (IVIG…AASG), 188–208 (WLFA…ALLL), 245–265 (GFGV…LIPF), and 292–312 (WSIF…LPMA).

It belongs to the UbiA prenyltransferase family. Protoheme IX farnesyltransferase subfamily.

It localises to the cell inner membrane. It carries out the reaction heme b + (2E,6E)-farnesyl diphosphate + H2O = Fe(II)-heme o + diphosphate. The protein operates within porphyrin-containing compound metabolism; heme O biosynthesis; heme O from protoheme: step 1/1. Its function is as follows. Converts heme B (protoheme IX) to heme O by substitution of the vinyl group on carbon 2 of heme B porphyrin ring with a hydroxyethyl farnesyl side group. This Prochlorococcus marinus (strain MIT 9303) protein is Protoheme IX farnesyltransferase.